We begin with the raw amino-acid sequence, 233 residues long: Probable F-box protein At3g56670 (233 aa).

The F-box domain maps to 22-69; it reads HGGVIDIPLNTDSGVTKNTPGEIALLRFKSVSKLWSSIISSRRDFIES.

The chain is Probable F-box protein At3g56670 from Arabidopsis thaliana (Mouse-ear cress).